The following is a 620-amino-acid chain: Guanylate-binding protein 3 (620 aa).

The tract at residues 1 to 304 (MEAPICLVEN…NAINSGTVPC (304 aa)) is GTPase domain (Globular). One can recognise a GB1/RHD3-type G domain in the interval 29-271 (AQPLVVVAIV…FCSYIFTNGK (243 aa)). Residues 39 to 46 (GLYRTGKS), 61 to 63 (LGS), and 91 to 95 (DTEGL) each bind GTP. Coiled-coil stretches lie at residues 375–411 (KKLVVTIEERKEEFIRQNEAASIRHCQAELERLSESL) and 477–582 (DGER…TRRK).

It belongs to the TRAFAC class dynamin-like GTPase superfamily. GB1/RHD3 GTPase family. GB1 subfamily. As to quaternary structure, heterodimer with other family members, including GBP1, GBP2 and GBP5. Dimerization regulates subcellular location. In terms of tissue distribution, brain, lung, heart, spleen, kidney, liver and intestine.

The protein resides in the cytoplasm. Its subcellular location is the perinuclear region. It is found in the golgi apparatus membrane. It carries out the reaction GTP + H2O = GDP + phosphate + H(+). Its function is as follows. Interferon (IFN)-inducible GTPase that plays important roles in innate immunity against a diverse range of bacterial, viral and protozoan pathogens. Hydrolyzes GTP very efficiently; GDP rather than GMP is the major reaction product. Following infection, recruited to the pathogen-containing vacuoles or vacuole-escaped bacteria and acts as a positive regulator of inflammasome assembly by promoting the release of inflammasome ligands from bacteria. Acts by promoting lysis of pathogen-containing vacuoles, releasing pathogens into the cytosol. Following pathogen release in the cytosol, promotes recruitment of proteins that mediate bacterial cytolysis, such as Gm12250/Irgb10: this liberates ligands that are detected by inflammasomes, such as lipopolysaccharide (LPS) that activates the non-canonical CASP4/CASP11 inflammasome or double-stranded DNA (dsDNA) that activates the AIM2 inflammasome. May play a role in erythroid differentiation. The protein is Guanylate-binding protein 3 of Mus musculus (Mouse).